The following is a 194-amino-acid chain: WASH complex subunit 3 (194 aa).

Met1 bears the N-acetylmethionine mark. The stretch at 46-74 (AVCEEKLADLSLRIQQIETTLNILDAKLS) forms a coiled coil. Disordered regions lie at residues 94 to 126 (VTNG…PSEN) and 158 to 194 (SEGL…SFSD). Residues 98–113 (SHSETTSEQTQQNSTQ) show a composition bias toward low complexity. The segment covering 114–126 (DSGAQESEAPSEN) has biased composition (polar residues).

Belongs to the CCDC53 family. As to quaternary structure, component of the WASH core complex also described as WASH regulatory complex (SHRC) composed of WASHC1, WASHC2, WASHC3, WASHC4 and WASHC5. The WASH core complex associates via WASHC2 with the F-actin-capping protein dimer (formed by CAPZA1, CAPZA2 or CAPZA3 and CAPZB) in a transient or substoichiometric manner which was initially described as WASH complex.

The protein localises to the early endosome. Acts as a component of the WASH core complex that functions as a nucleation-promoting factor (NPF) at the surface of endosomes, where it recruits and activates the Arp2/3 complex to induce actin polymerization, playing a key role in the fission of tubules that serve as transport intermediates during endosome sortingg. In Mus musculus (Mouse), this protein is WASH complex subunit 3.